We begin with the raw amino-acid sequence, 113 residues long: Large ribosomal subunit protein uL22 (113 aa).

The protein belongs to the universal ribosomal protein uL22 family. In terms of assembly, part of the 50S ribosomal subunit.

In terms of biological role, this protein binds specifically to 23S rRNA; its binding is stimulated by other ribosomal proteins, e.g. L4, L17, and L20. It is important during the early stages of 50S assembly. It makes multiple contacts with different domains of the 23S rRNA in the assembled 50S subunit and ribosome. Functionally, the globular domain of the protein is located near the polypeptide exit tunnel on the outside of the subunit, while an extended beta-hairpin is found that lines the wall of the exit tunnel in the center of the 70S ribosome. This is Large ribosomal subunit protein uL22 from Halalkalibacterium halodurans (strain ATCC BAA-125 / DSM 18197 / FERM 7344 / JCM 9153 / C-125) (Bacillus halodurans).